The chain runs to 197 residues: Recombination protein RecR (197 aa).

The C4-type zinc finger occupies 55-70; sequence CVQCRDFTESEVCAIC. The Toprim domain occupies 78 to 173; that stretch reads QQLCVVESPA…RPSRLAQGMP (96 aa).

It belongs to the RecR family.

May play a role in DNA repair. It seems to be involved in an RecBC-independent recombinational process of DNA repair. It may act with RecF and RecO. The sequence is that of Recombination protein RecR from Xanthomonas campestris pv. campestris (strain 8004).